We begin with the raw amino-acid sequence, 373 residues long: NAD(P)H-quinone oxidoreductase subunit 1 (373 aa).

8 helical membrane passes run 28–48 (LLWLPLPMLLVLVAAVVGVLV), 98–118 (LLFTLGPVLVVVPVIISWLII), 129–149 (VGVGIFLWISFSSIQPIGLLM), 177–197 (LALAVLAIVMMTNSLSTVDIV), 205–225 (ILSWNIWRQPVGFLIFWICAL), 267–287 (VLSAVLVSVLYLGGWGFPIPV), 309–329 (TVGIVMTVLKAYLLVFVAILL), and 348–368 (FLLPLSLVNLLVTAALKLAFP).

Belongs to the complex I subunit 1 family. As to quaternary structure, NDH-1 is composed of at least 11 different subunits.

The protein resides in the cellular thylakoid membrane. It carries out the reaction a plastoquinone + NADH + (n+1) H(+)(in) = a plastoquinol + NAD(+) + n H(+)(out). It catalyses the reaction a plastoquinone + NADPH + (n+1) H(+)(in) = a plastoquinol + NADP(+) + n H(+)(out). NDH-1 shuttles electrons from an unknown electron donor, via FMN and iron-sulfur (Fe-S) centers, to quinones in the respiratory and/or the photosynthetic chain. The immediate electron acceptor for the enzyme in this species is believed to be plastoquinone. Couples the redox reaction to proton translocation, and thus conserves the redox energy in a proton gradient. The chain is NAD(P)H-quinone oxidoreductase subunit 1 from Synechococcus sp. (strain CC9605).